We begin with the raw amino-acid sequence, 236 residues long: Orotidine 5'-phosphate decarboxylase (236 aa).

Residues aspartate 11, lysine 33, 60-69, threonine 119, arginine 181, glutamine 190, glycine 210, and arginine 211 contribute to the substrate site; that span reads DLKLHDIPNT. The active-site Proton donor is lysine 62.

It belongs to the OMP decarboxylase family. Type 1 subfamily. Homodimer.

It carries out the reaction orotidine 5'-phosphate + H(+) = UMP + CO2. Its pathway is pyrimidine metabolism; UMP biosynthesis via de novo pathway; UMP from orotate: step 2/2. Functionally, catalyzes the decarboxylation of orotidine 5'-monophosphate (OMP) to uridine 5'-monophosphate (UMP). This is Orotidine 5'-phosphate decarboxylase from Cutibacterium acnes (strain DSM 16379 / KPA171202) (Propionibacterium acnes).